An 81-amino-acid chain; its full sequence is Large ribosomal subunit protein bL31B (81 aa).

This sequence belongs to the bacterial ribosomal protein bL31 family. Type B subfamily. As to quaternary structure, part of the 50S ribosomal subunit.

The sequence is that of Large ribosomal subunit protein bL31B from Bacillus cereus (strain G9842).